The chain runs to 388 residues: Succinate--CoA ligase [ADP-forming] subunit beta (388 aa).

The ATP-grasp domain maps to 9 to 245 (KALLKEYGMP…KSQENERELK (237 aa)). ATP contacts are provided by residues Lys46, 53-55 (GRG), Glu100, Tyr103, and Glu108. The Mg(2+) site is built by Asn200 and Asp214. Substrate-binding positions include Asn265 and 322 to 324 (GIV).

The protein belongs to the succinate/malate CoA ligase beta subunit family. Heterotetramer of two alpha and two beta subunits. It depends on Mg(2+) as a cofactor.

It carries out the reaction succinate + ATP + CoA = succinyl-CoA + ADP + phosphate. It catalyses the reaction GTP + succinate + CoA = succinyl-CoA + GDP + phosphate. It functions in the pathway carbohydrate metabolism; tricarboxylic acid cycle; succinate from succinyl-CoA (ligase route): step 1/1. In terms of biological role, succinyl-CoA synthetase functions in the citric acid cycle (TCA), coupling the hydrolysis of succinyl-CoA to the synthesis of either ATP or GTP and thus represents the only step of substrate-level phosphorylation in the TCA. The beta subunit provides nucleotide specificity of the enzyme and binds the substrate succinate, while the binding sites for coenzyme A and phosphate are found in the alpha subunit. This Acinetobacter baumannii (strain SDF) protein is Succinate--CoA ligase [ADP-forming] subunit beta.